A 500-amino-acid chain; its full sequence is Probable cytosol aminopeptidase (500 aa).

2 residues coordinate Mn(2+): Lys-268 and Asp-273. Lys-280 is an active-site residue. Mn(2+) is bound by residues Asp-291, Asp-350, and Glu-352. Arg-354 is an active-site residue.

The protein belongs to the peptidase M17 family. The cofactor is Mn(2+).

The protein localises to the cytoplasm. The enzyme catalyses Release of an N-terminal amino acid, Xaa-|-Yaa-, in which Xaa is preferably Leu, but may be other amino acids including Pro although not Arg or Lys, and Yaa may be Pro. Amino acid amides and methyl esters are also readily hydrolyzed, but rates on arylamides are exceedingly low.. The catalysed reaction is Release of an N-terminal amino acid, preferentially leucine, but not glutamic or aspartic acids.. Presumably involved in the processing and regular turnover of intracellular proteins. Catalyzes the removal of unsubstituted N-terminal amino acids from various peptides. The sequence is that of Probable cytosol aminopeptidase from Azoarcus sp. (strain BH72).